Reading from the N-terminus, the 134-residue chain is Protein NrdI (134 aa).

This sequence belongs to the NrdI family.

Its function is as follows. Probably involved in ribonucleotide reductase function. The chain is Protein NrdI from Serratia proteamaculans (strain 568).